A 1049-amino-acid chain; its full sequence is Bifunctional cytochrome P450/NADPH--P450 reductase (1049 aa).

The tract at residues 2–472 is cytochrome P450; the sequence is TIKEMPQPKT…STEQSAKKVR (471 aa). Residue Tyr52 participates in (9Z)-hexadecenoate binding. Cys401 lines the heme pocket. The NADPH--P450 reductase stretch occupies residues 473 to 1049; the sequence is KKAENAHNTP…GRYAKDVWAG (577 aa). The Flavodoxin-like domain maps to 483–622; it reads LLVLYGSNMG…TYEEWREHMW (140 aa). FMN-binding positions include 489 to 494, 536 to 539, 570 to 572, and 578 to 580; these read SNMGTA, SYNG, CGD, and TYQ. Residues 660–892 form the FAD-binding FR-type domain; sequence HGAFSTNVVA…STPQSEFTLP (233 aa).

In the N-terminal section; belongs to the cytochrome P450 family. It depends on FAD as a cofactor. The cofactor is FMN. Requires heme as cofactor.

It localises to the cytoplasm. It carries out the reaction 2 oxidized [cytochrome P450] + NADPH = 2 reduced [cytochrome P450] + NADP(+) + H(+). The catalysed reaction is an organic molecule + reduced [NADPH--hemoprotein reductase] + O2 = an alcohol + oxidized [NADPH--hemoprotein reductase] + H2O + H(+). With respect to regulation, inhibited by N-(12-imidazolyl-dodecanoyl)-L-leucine. In terms of biological role, functions as a fatty acid monooxygenase. Catalyzes hydroxylation of fatty acids at omega-1, omega-2 and omega-3 positions. Shows activity toward medium and long-chain fatty acids, with optimum chain lengths of 12, 14 and 16 carbons (lauric, myristic, and palmitic acids). Able to metabolize some of these primary metabolites to secondary and tertiary products. Marginal activity towards short chain lengths of 8-10 carbons. Hydroxylates highly branched fatty acids, which play an essential role in membrane fluidity regulation. Also displays a NADPH-dependent reductase activity in the C-terminal domain, which allows electron transfer from NADPH to the heme iron of the cytochrome P450 N-terminal domain. Involved in inactivation of quorum sensing signals of other competing bacteria by oxidazing efficiently acyl homoserine lactones (AHLs), molecules involved in quorum sensing signaling pathways, and their lactonolysis products acyl homoserines (AHs). The sequence is that of Bifunctional cytochrome P450/NADPH--P450 reductase from Priestia megaterium (strain ATCC 14581 / DSM 32 / CCUG 1817 / JCM 2506 / NBRC 15308 / NCIMB 9376 / NCTC 10342 / NRRL B-14308 / VKM B-512 / Ford 19) (Bacillus megaterium).